Here is a 728-residue protein sequence, read N- to C-terminus: Meiotic sister-chromatid recombination protein 3 (728 aa).

7 disordered regions span residues 33 to 171, 236 to 261, 300 to 335, 363 to 403, 422 to 454, 495 to 514, and 561 to 728; these read QLSA…GRTQ, NETD…LNVE, PTHQ…EAEA, SDNA…VKSN, SAPH…ANTG, VGVS…QHYL, and YGYQ…KSSR. The segment covering 35-46 has biased composition (low complexity); sequence SAAAASAASAAS. Positions 48–58 are enriched in polar residues; that stretch reads DRTNYSRSHSL. 2 positions are modified to phosphoserine: Ser57 and Ser64. A compositionally biased stretch (low complexity) spans 80–93; sequence STSSAAPPTSRAAA. 3 stretches are compositionally biased toward polar residues: residues 95 to 106, 118 to 132, and 140 to 171; these read QYSQKTYSLRSQ, YTTN…TSGA, and KNKS…GRTQ. Phosphoserine is present on residues Ser127, Ser151, and Ser155. Residues 251–261 show a composition bias toward basic and acidic residues; that stretch reads HLQDDSELNVE. Basic residues predominate over residues 309–326; the sequence is IHNKRKQASTTRRKKRPP. Ser363 carries the post-translational modification Phosphoserine. Polar residues-rich tracts occupy residues 363–373 and 385–403; these read SDNASAPLGSN and TLRS…VKSN. Over residues 590–634 the composition is skewed to polar residues; it reads EGVTTAKPSSNEGVMTNPVVTDSPSPLQQQIDSTTASSNGQSQGN. Residues 635–646 are compositionally biased toward low complexity; the sequence is VPTSAVASTTRT. Position 646 is a phosphothreonine (Thr646). Composition is skewed to polar residues over residues 654–668, 675–684, and 691–708; these read NLKS…QTPQ, DPTTSSTNEL, and MVTS…TQDP. The residue at position 660 (Ser660) is a Phosphoserine. Residues 711–728 show a composition bias toward basic residues; sequence KHKKSSFFTKLFKKKSSR.

The protein localises to the cell membrane. Functionally, may be involved in the control of meiotic sister-chromatid recombination. The protein is Meiotic sister-chromatid recombination protein 3 (MSC3) of Saccharomyces cerevisiae (strain ATCC 204508 / S288c) (Baker's yeast).